Consider the following 881-residue polypeptide: NACHT, LRR and PYD domains-containing protein 6 (881 aa).

The 129-residue stretch at Met1–Val129 folds into the Pyrin domain. At Ser104 the chain carries Phosphoserine. The disordered stretch occupies residues Ala154 to Asp175. One can recognise an NACHT domain in the interval Leu194–Leu510. Gly200–Thr207 is an ATP binding site. An LRR 1 repeat occupies Glu459–Gly484. Residues Gln579–Glu611 form a disordered region. Over residues Lys596–Glu611 the composition is skewed to acidic residues. LRR repeat units lie at residues Leu637–Tyr660, Ala749–Gln772, and Thr839–Pro863.

This sequence belongs to the NLRP family. Homomultimer; forms the NLRP6 inflammasome polymeric complex, a filament composed of homopolymers in response to pathogens and other damage-associated signals. The core of NLRP6 inflammasomes consists of a signal sensor component (NLRP6), an adapter (PYCARD/ASC), which recruits effector pro-inflammatory caspases (CASP1 and CASP4). Interacts (via pyrin domain) with PYCARD/ASC (via pyrin domain); interaction takes place following NLRP6 activation and formation of liquid-liquid phase separation (LLPS), initiating nucleation which greatly enhances further addition of soluble PYCARD/ASC molecules to the speck in a prion-like polymerization process. Clustered PYCARD/ASC nucleates the formation of CASP1 (or possibly CASP4) filaments through the interaction of their respective CARD domains, acting as a platform for CASP1 polymerization. CASP1 filament formation increases local enzyme concentration, resulting in trans-autocleavage and activation. Active CASP1 then processes IL1B and IL18 precursors, leading to the release of mature cytokines in the extracellular milieu and inflammatory response. Interacts with DHX15. In terms of processing, polyubiquitinated with 'Lys-63'-linked chains, promoting the interaction with PYCARD/ASC and formation of the NLRP6 inflammasome. Deubiquitination by CYLD decreases the interaction with PYCARD/ASC. In terms of tissue distribution, detected in several tissues. Expressed in renal epithelial cells in medullary thick ascending limb of Henle, as well as in salivary gland apical epithelium (at protein level). Isoform 1 is widely expressed. Isoform 2 is primarily expressed in kidney (at protein level).

The protein resides in the cytoplasm. It localises to the inflammasome. It is found in the cell membrane. Its subcellular location is the nucleus membrane. Its function is as follows. Acts as the sensor component of the NLRP6 inflammasome, which mediates inflammasome activation in response to various pathogen-associated signals, leading to maturation and secretion of IL1B and IL18. Inflammasomes are supramolecular complexes that assemble in the cytosol in response to pathogens and other damage-associated signals and play critical roles in innate immunity and inflammation. Acts as a recognition receptor (PRR): recognizes and binds specific pathogens and other damage-associated signals, such as lipoteichoic acid (LTA), a cell-wall component of Gram-positive bacteria, or double stranded RNA (dsRNA). May also recognize and bind lipopolysaccharide (LPS), a major component of the outer membrane of Gram-negative bacteria; however, LPS is probably not a major activator of the NLRP6 inflammasome. Following LTA- or dsRNA-binding, NLRP6 undergoes liquid-liquid phase separation (LLPS), enhancing multivalent interactions, an essential step for the formation of the NLRP6 inflammasome polymeric complex. The NLRP6 inflammasome acts by promoting recruitment of effector pro-inflammatory caspases (CASP1 and/or CASP4) that catalyze maturation and secretion of IL1B and IL18 in the extracellular milieu. The NLRP6 inflammasome plays a central role in the maintenance of epithelial integrity and host defense against microbial infections in the intestine. Required to restrict infection against Gram-positive bacteria by recognizing lipoteichoic acid (LTA), leading to recruitment of CASP4 and CASP1, and subsequent maturation and secretion of IL1B and IL18. Involved in intestinal antiviral innate immunity together with DHX15: recognizes and binds viral dsRNA to restrict infection by enteric viruses through the interferon pathway and GSDMD-dependent release of IL18. Required to prevent infection by the apicomplexan parasite Cryptosporidium in enterocytes by promoting GSDMD-dependent release of IL18. The NLRP6 inflammasome may also regulate the gut microbiota composition by acting as a sensor of microbiota-associated metabolites to form a PYCARD/ASC-dependent inflammasome for downstream IL18 release and secretion of antimicrobial peptides. Essential for gut mucosal self-renewal and proliferation. Regulate mucus secretion in an inflammasome- and autophagy-dependent manner to prevent invasion by enteric bacteria,. During systemic bacterial infections, the NLRP6 inflammasome negatively regulates neutrophil recruitment and neutrophil extracellular traps (NETs) formation. May promote peripheral nerve recovery following injury via an inflammasome-independent mechanism. The sequence is that of NACHT, LRR and PYD domains-containing protein 6 from Rattus norvegicus (Rat).